A 110-amino-acid polypeptide reads, in one-letter code: Thioredoxin Asp f 29 (110 aa).

The Thioredoxin domain maps to 1–110; that stretch reads MSHNVEKITD…LEAAIKAHVA (110 aa). Residues cysteine 34 and cysteine 37 each act as nucleophile in the active site. Cysteines 34 and 37 form a disulfide.

The protein belongs to the thioredoxin family.

In terms of biological role, participates in various redox reactions through the reversible oxidation of its active center dithiol to a disulfide and catalyzes dithiol-disulfide exchange reactions. The chain is Thioredoxin Asp f 29 from Aspergillus fumigatus (Neosartorya fumigata).